A 234-amino-acid polypeptide reads, in one-letter code: Exotoxin type G (234 aa).

Positions 1–24 (MKTNILTIIILSCVFSYGSQLAYA) are cleaved as a signal peptide.

This sequence belongs to the staphylococcal/streptococcal toxin family.

Functionally, mitogenic for human peripheral blood lymphocytes. The sequence is that of Exotoxin type G (speG) from Streptococcus pyogenes serotype M1.